A 386-amino-acid polypeptide reads, in one-letter code: MRLSNLIASASLLSAATLAAPANHEHKDKRAVVTTTVQKQTTIIVNGAASTPVAALEENAVVNSAPAAATSTTSSAASVATAAASSSENNSQVSAAASPASSSAATSTQSSSSSQASSSSSSGEDVSSFASGVRGITYTPYESSGACKSASEVASDLAQLTDFPVIRLYGTDCNQVENVFKAKASNQKVFLGIYYVDQIQDGVNTIKSAVESYGSWDDVTTVSIGNELVNGNQATPSQVGQYIDSGRSALKAAGYTGPVVSVDTFIAVINNPELCDYSDYMAVNAHAYFDKNTVAQDSGKWLLEQIQRVWTACDGKKNVVITESGWPSKGETYGVAVPSKENQKDAVSAITSSCGADTFLFTAFNDYWKADGAYGVEKYWGILSNE.

The N-terminal stretch at 1–19 (MRLSNLIASASLLSAATLA) is a signal peptide. A propeptide spanning residues 20 to 30 (APANHEHKDKR) is cleaved from the precursor. A disordered region spans residues 88–127 (ENNSQVSAAASPASSSAATSTQSSSSSQASSSSSSGEDVS). Residue Asn-89 is glycosylated (N-linked (GlcNAc...) asparagine). Glu-323 serves as the catalytic Nucleophile.

The protein belongs to the glycosyl hydrolase 17 family. In terms of processing, N-glycosylated.

Its subcellular location is the secreted. It is found in the cell wall. Its function is as follows. Glucanases possibly play a role in cell expansion during growth, in cell-cell fusion during mating, and in spore release during sporulation. This chain is Probable family 17 glucosidase SCW4 (SCW4), found in Saccharomyces cerevisiae (strain ATCC 204508 / S288c) (Baker's yeast).